The primary structure comprises 861 residues: MNPSSKTFYHPYSPYDIQVQFMRSLYTCIEECKVGIFESPTGTGKSLSLICGSLTWLRDHKRSVFLEDIENSDGDDEPEWILQYSRKEKRRIIRERRKRVEDRLSRIRKEELLREKAAIANIPFKKQRLEDGKRHLDKMADDGAFELDEYDSDNQETSTHDAKSNSDLSATTIALLEKLSGSAEIQDDFEEENAVKIFYCSRTHSQLAQFARELRRVVFPPSIPPETEDGEIDTQGEGRRHPDTELEEPTKHVSLGSRKTMCINPKVRRLGNATAINERCLDLQSSNVLPGHKCPFAPSKENELAINDFRDHVLAEVHDIEDIGKIGQRTGICPYYASRSVIGHSEIVTLPYQLLLQKSARDALDISLKDHVIIIDEAHNLMDVIANIHSVNVSLTQLRIGLEQLTIYARKYKARLKGKNRVYVAQVMRLLGSIAKYLESVLAARELREGAVDPSYLMSGKGIDQINLHKLSRYLQESKLARKVDGYIESSTSLEEKNPETSTTVPVLFQVQSFLLSLMNPSAEGRLFFEKNGNDVLLKYTLLDPTAHFREAVEEARAVILAGGTMSPMSDYRDHLFSYLAPGQLRTFSYGHVIPTSNLSARPVSRGILDTEFDFTFEKRNSRAMIIDLGKTISEICKATPDGVVAFFPSYDFLNQVVEIWKQPCSNSGNPSILDSLGLVKPLLYESKEKAMNTEALLQKYANFIDEGKGALLLSVMGGKLSEGINFSDRLGRGVIVIGLPFANIRSAEWQAKIQYVERKTYERSSGGEETRRSKAKLAGRDFYENACMRVVNQCIGRAIRHQHDYAAILMFDRRYGTARIQSKLPEWIRRSLISAPIGATISNLYTFFEEKSSIEVTKEK.

The Helicase ATP-binding domain maps to 4-428 (SSKTFYHPYS…KNRVYVAQVM (425 aa)). 39–46 (SPTGTGKS) provides a ligand contact to ATP. The disordered stretch occupies residues 220 to 250 (PPSIPPETEDGEIDTQGEGRRHPDTELEEPT). Positions 236-250 (GEGRRHPDTELEEPT) are enriched in basic and acidic residues. 4 residues coordinate [4Fe-4S] cluster: Cys-262, Cys-280, Cys-294, and Cys-333. The short motif at 376–379 (DEAH) is the DEAH box element.

This sequence belongs to the DEAD box helicase family. DEAH subfamily. DDX11/CHL1 sub-subfamily. [4Fe-4S] cluster serves as cofactor.

The protein localises to the nucleus. It catalyses the reaction Couples ATP hydrolysis with the unwinding of duplex DNA at the replication fork by translocating in the 5'-3' direction. This creates two antiparallel DNA single strands (ssDNA). The leading ssDNA polymer is the template for DNA polymerase III holoenzyme which synthesizes a continuous strand.. The enzyme catalyses ATP + H2O = ADP + phosphate + H(+). Functionally, ATP-dependent DNA helicase important for chromosome transmission and normal cell cycle progression in G(2)/M. May have a role in changing DNA topology to allow the loading of proteins involved in maintaining sister chromatid cohesion in the vicinity of the centromeres. Has a specific role in chromosome segregation during meiosis II. The chain is ATP-dependent DNA helicase CHL1 (CHL1) from Coccidioides immitis (strain RS) (Valley fever fungus).